Reading from the N-terminus, the 156-residue chain is D-aminoacyl-tRNA deacylase (156 aa).

A Gly-cisPro motif, important for rejection of L-amino acids motif is present at residues 139–140; the sequence is GP.

It belongs to the DTD family. In terms of assembly, homodimer.

It is found in the cytoplasm. It catalyses the reaction glycyl-tRNA(Ala) + H2O = tRNA(Ala) + glycine + H(+). The catalysed reaction is a D-aminoacyl-tRNA + H2O = a tRNA + a D-alpha-amino acid + H(+). An aminoacyl-tRNA editing enzyme that deacylates mischarged D-aminoacyl-tRNAs. Also deacylates mischarged glycyl-tRNA(Ala), protecting cells against glycine mischarging by AlaRS. Acts via tRNA-based rather than protein-based catalysis; rejects L-amino acids rather than detecting D-amino acids in the active site. By recycling D-aminoacyl-tRNA to D-amino acids and free tRNA molecules, this enzyme counteracts the toxicity associated with the formation of D-aminoacyl-tRNA entities in vivo and helps enforce protein L-homochirality. The protein is D-aminoacyl-tRNA deacylase of Marinobacter nauticus (strain ATCC 700491 / DSM 11845 / VT8) (Marinobacter aquaeolei).